Here is a 215-residue protein sequence, read N- to C-terminus: Octanoyltransferase (215 aa).

Positions 31–206 constitute a BPL/LPL catalytic domain; the sequence is PESQDEVWLV…QLVRHLDYAE (176 aa). Residues 70–77, 137–139, and 150–152 contribute to the substrate site; these read RGGQVTYH, SLG, and GLA. C168 acts as the Acyl-thioester intermediate in catalysis.

Belongs to the LipB family.

The protein localises to the cytoplasm. The catalysed reaction is octanoyl-[ACP] + L-lysyl-[protein] = N(6)-octanoyl-L-lysyl-[protein] + holo-[ACP] + H(+). Its pathway is protein modification; protein lipoylation via endogenous pathway; protein N(6)-(lipoyl)lysine from octanoyl-[acyl-carrier-protein]: step 1/2. Its function is as follows. Catalyzes the transfer of endogenously produced octanoic acid from octanoyl-acyl-carrier-protein onto the lipoyl domains of lipoate-dependent enzymes. Lipoyl-ACP can also act as a substrate although octanoyl-ACP is likely to be the physiological substrate. The sequence is that of Octanoyltransferase from Pseudomonas entomophila (strain L48).